A 323-amino-acid polypeptide reads, in one-letter code: L-lactate dehydrogenase 1 (323 aa).

NAD(+) contacts are provided by residues V17, D38, R43, Y68, and 82-83; that span reads GA. Substrate contacts are provided by Q85 and R91. NAD(+) contacts are provided by residues S104, 121–123, and S146; that span reads AAN. 123 to 126 contributes to the substrate binding site; sequence NPVD. 151-154 serves as a coordination point for substrate; sequence DTGR. Residue H178 is the Proton acceptor of the active site. A Phosphotyrosine modification is found at Y223. Substrate is bound at residue T232.

The protein belongs to the LDH/MDH superfamily. LDH family. Homotetramer.

It localises to the cytoplasm. It catalyses the reaction (S)-lactate + NAD(+) = pyruvate + NADH + H(+). It participates in fermentation; pyruvate fermentation to lactate; (S)-lactate from pyruvate: step 1/1. Catalyzes the conversion of lactate to pyruvate. The chain is L-lactate dehydrogenase 1 from Lactobacillus johnsonii (strain CNCM I-12250 / La1 / NCC 533).